The chain runs to 748 residues: Catalase-peroxidase (748 aa).

Residues 1-14 are compositionally biased toward basic and acidic residues; it reads MTDTSDARPPHSDA. The interval 1 to 40 is disordered; that stretch reads MTDTSDARPPHSDAKTASNSESENPAIDSPEPKSHAPLTN. Residues 112–239 constitute a cross-link (tryptophyl-tyrosyl-methioninium (Trp-Tyr) (with M-265)); it reads WHAAGTYRIF…FGATTMGLIY (128 aa). Residue histidine 113 is the Proton acceptor of the active site. Positions 239-265 form a cross-link, tryptophyl-tyrosyl-methioninium (Tyr-Met) (with W-112); the sequence is YVNPEGPEGKPDPLAAAHDIRETFGRM. Histidine 280 provides a ligand contact to heme b.

Belongs to the peroxidase family. Peroxidase/catalase subfamily. In terms of assembly, homodimer or homotetramer. Heme b is required as a cofactor. Post-translationally, formation of the three residue Trp-Tyr-Met cross-link is important for the catalase, but not the peroxidase activity of the enzyme.

The enzyme catalyses H2O2 + AH2 = A + 2 H2O. It carries out the reaction 2 H2O2 = O2 + 2 H2O. Functionally, bifunctional enzyme with both catalase and broad-spectrum peroxidase activity. In Mycolicibacterium gilvum (strain PYR-GCK) (Mycobacterium gilvum (strain PYR-GCK)), this protein is Catalase-peroxidase.